A 148-amino-acid chain; its full sequence is Deoxyuridine 5'-triphosphate nucleotidohydrolase (148 aa).

Substrate contacts are provided by residues 68 to 70 (RSG), Asn81, 85 to 87 (TID), and Lys95.

The protein belongs to the dUTPase family. Mg(2+) is required as a cofactor.

The enzyme catalyses dUTP + H2O = dUMP + diphosphate + H(+). It participates in pyrimidine metabolism; dUMP biosynthesis; dUMP from dCTP (dUTP route): step 2/2. Its function is as follows. This enzyme is involved in nucleotide metabolism: it produces dUMP, the immediate precursor of thymidine nucleotides and it decreases the intracellular concentration of dUTP so that uracil cannot be incorporated into DNA. In Rickettsia akari (strain Hartford), this protein is Deoxyuridine 5'-triphosphate nucleotidohydrolase.